The primary structure comprises 341 residues: MKVSDFYYDLPQELIAQEPVEKRDMSRLMVLDKETGKISHKRFKDIVEYINKGDCLVLNDTRVIPARLLGEKEGTGGKIEFVLLKRINGDVWEVILKPGKKAKPGARFVFGNGELKAEVIEIVEEGNRLVRFEYDGIFEEILDRIGIVPLPPYITKKLDDAERYQTVYSRYKGSAAAPTAGLHFTLELLEELAGRGVKIAYVTLHVGLGTFRPVKVENLEEHKMHSEFYRIKEEDCDKINSTKQNGGKIIAVGTTSCRVLETVGDENGIVRPQSGWTDIFIYPGYKFKVVDSLITNFHLPESTLIMLVSALAGREKILEAYNIAVKERYRFFSFGDAMFIK.

The protein belongs to the QueA family. Monomer.

The protein localises to the cytoplasm. The catalysed reaction is 7-aminomethyl-7-carbaguanosine(34) in tRNA + S-adenosyl-L-methionine = epoxyqueuosine(34) in tRNA + adenine + L-methionine + 2 H(+). The protein operates within tRNA modification; tRNA-queuosine biosynthesis. Functionally, transfers and isomerizes the ribose moiety from AdoMet to the 7-aminomethyl group of 7-deazaguanine (preQ1-tRNA) to give epoxyqueuosine (oQ-tRNA). The sequence is that of S-adenosylmethionine:tRNA ribosyltransferase-isomerase from Acetivibrio thermocellus (strain ATCC 27405 / DSM 1237 / JCM 9322 / NBRC 103400 / NCIMB 10682 / NRRL B-4536 / VPI 7372) (Clostridium thermocellum).